Reading from the N-terminus, the 337-residue chain is Protein ABHD13 (337 aa).

A helical; Signal-anchor for type II membrane protein membrane pass occupies residues 30–50; the sequence is LLALILTFHLYGGFVLLGLIL. Catalysis depends on charge relay system residues S193, D268, and H298. A glycan (N-linked (GlcNAc...) asparagine) is linked at N299.

It belongs to the serine esterase family.

It is found in the membrane. This Danio rerio (Zebrafish) protein is Protein ABHD13.